Here is a 722-residue protein sequence, read N- to C-terminus: Polyribonucleotide nucleotidyltransferase (722 aa).

The Mg(2+) site is built by aspartate 495 and aspartate 501. The region spanning proline 562 to isoleucine 621 is the KH domain. An S1 motif domain is found at glycine 631–arginine 699. Polar residues predominate over residues valine 701–proline 711. The disordered stretch occupies residues valine 701–asparagine 722. Positions glutamine 712–asparagine 722 are enriched in pro residues.

This sequence belongs to the polyribonucleotide nucleotidyltransferase family. It depends on Mg(2+) as a cofactor.

Its subcellular location is the cytoplasm. It carries out the reaction RNA(n+1) + phosphate = RNA(n) + a ribonucleoside 5'-diphosphate. In terms of biological role, involved in mRNA degradation. Catalyzes the phosphorolysis of single-stranded polyribonucleotides processively in the 3'- to 5'-direction. In Prochlorococcus marinus (strain MIT 9211), this protein is Polyribonucleotide nucleotidyltransferase.